We begin with the raw amino-acid sequence, 109 residues long: Hainantoxin-XVIII.2 (109 aa).

The first 18 residues, 1–18 (MKLSIIIIVTSLVIAVVA), serve as a signal peptide directing secretion. A propeptide spanning residues 19–46 (FPSKDSKAIENDKTEQRMEIVVQETARA) is cleaved from the precursor. Disulfide bonds link Cys47/Cys62, Cys55/Cys68, Cys59/Cys108, and Cys61/Cys81.

Belongs to the neurotoxin 25 family. F7 subfamily. Expressed by the venom gland.

The protein localises to the secreted. Its function is as follows. Putative ion channel inhibitor. The sequence is that of Hainantoxin-XVIII.2 from Cyriopagopus hainanus (Chinese bird spider).